We begin with the raw amino-acid sequence, 202 residues long: MATLIYVDKENEEPGTLVATKDGLKLGSGPSIKALDGRSQVSTSRFGKTFDAATALPKATRKALGTVNRATEKSVKTNGPLKQKQPSFSAKKMTEKTVKAKSSVPASDDAYPEIEKLFPFNPLGFESFNLPEEHQIAHLPLSGVPLMILDEERELEKLFQLGPPLPLKMPSPPWESNLLQSPSSILLTLDVELPPVCSDIDI.

The short motif at 61 to 64 (RKAL) is the D-box element. The interval 67-92 (VNRATEKSVKTNGPLKQKQPSFSAKK) is disordered. An SH3-binding motif is present at residues 163-173 (PPLPLKMPSPP).

The protein belongs to the securin family.

The protein resides in the cytoplasm. Its subcellular location is the nucleus. The chain is Putative pituitary tumor-transforming gene 3 protein (PTTG3) from Pongo pygmaeus (Bornean orangutan).